Reading from the N-terminus, the 204-residue chain is Histone H3-like centromeric protein CSE4 (204 aa).

The segment at 68–107 is disordered; the sequence is RVAEPAAAESRADGAREEERAARPARPRETRRIAKKPQRY. The span at 77–99 shows a compositional bias: basic and acidic residues; that stretch reads SRADGAREEERAARPARPRETRR. Residues 89–202 form an H3-like region; that stretch reads ARPARPRETR…MQLARRIRGQ (114 aa).

It belongs to the histone H3 family. In terms of assembly, component of centromeric nucleosomes, where DNA is wrapped around a histone octamer core. The octamer contains two molecules each of H2A, H2B, CSE4/CENPA and H4 assembled in one CSE4-H4 heterotetramer and two H2A-H2B heterodimers. Interacts with the inner kinetochore. Ubiquitinated. Is degraded through ubiquitin-mediated proteolysis when not protected by its association to the kinetochore.

The protein localises to the nucleus. The protein resides in the chromosome. Its subcellular location is the centromere. Functionally, histone H3-like nucleosomal protein that is specifically found in centromeric nucleosomes. Replaces conventional H3 in the nucleosome core of centromeric chromatin that serves as an assembly site for the inner kinetochore. Required for recruitment and assembly of kinetochore proteins, mitotic progression and chromosome segregation. May serve as an epigenetic mark that propagates centromere identity through replication and cell division. This Eremothecium gossypii (strain ATCC 10895 / CBS 109.51 / FGSC 9923 / NRRL Y-1056) (Yeast) protein is Histone H3-like centromeric protein CSE4 (CSE4).